Reading from the N-terminus, the 86-residue chain is Large ribosomal subunit protein uL23 (86 aa).

The protein belongs to the universal ribosomal protein uL23 family. In terms of assembly, part of the 50S ribosomal subunit. Contacts protein L29.

In terms of biological role, binds to 23S rRNA. One of the proteins that surrounds the polypeptide exit tunnel on the outside of the ribosome. The protein is Large ribosomal subunit protein uL23 of Thermococcus kodakarensis (strain ATCC BAA-918 / JCM 12380 / KOD1) (Pyrococcus kodakaraensis (strain KOD1)).